The chain runs to 445 residues: Tubulin beta-5 chain (445 aa).

GTP is bound by residues glutamine 11, glutamate 69, serine 138, glycine 142, threonine 143, glycine 144, asparagine 204, and asparagine 226. Glutamate 69 is a Mg(2+) binding site. Positions 420–445 are disordered; it reads AEYQQYQDATADDEYEEGEEEEEEAA. The segment covering 429 to 445 has biased composition (acidic residues); the sequence is TADDEYEEGEEEEEEAA.

The protein belongs to the tubulin family. As to quaternary structure, dimer of alpha and beta chains. A typical microtubule is a hollow water-filled tube with an outer diameter of 25 nm and an inner diameter of 15 nM. Alpha-beta heterodimers associate head-to-tail to form protofilaments running lengthwise along the microtubule wall with the beta-tubulin subunit facing the microtubule plus end conferring a structural polarity. Microtubules usually have 13 protofilaments but different protofilament numbers can be found in some organisms and specialized cells. It depends on Mg(2+) as a cofactor.

Its subcellular location is the cytoplasm. It localises to the cytoskeleton. Its function is as follows. Tubulin is the major constituent of microtubules, a cylinder consisting of laterally associated linear protofilaments composed of alpha- and beta-tubulin heterodimers. Microtubules grow by the addition of GTP-tubulin dimers to the microtubule end, where a stabilizing cap forms. Below the cap, tubulin dimers are in GDP-bound state, owing to GTPase activity of alpha-tubulin. The polypeptide is Tubulin beta-5 chain (Gossypium hirsutum (Upland cotton)).